The primary structure comprises 442 residues: D-serine dehydratase (442 aa).

Position 118 is an N6-(pyridoxal phosphate)lysine (lysine 118).

Belongs to the serine/threonine dehydratase family. DsdA subfamily. In terms of assembly, monomer. Requires pyridoxal 5'-phosphate as cofactor.

It catalyses the reaction D-serine = pyruvate + NH4(+). The protein is D-serine dehydratase of Escherichia coli O6:H1 (strain CFT073 / ATCC 700928 / UPEC).